The chain runs to 271 residues: Thiazole synthase (271 aa).

Lysine 104 acts as the Schiff-base intermediate with DXP in catalysis. 1-deoxy-D-xylulose 5-phosphate is bound by residues glycine 165, 192–193, and 214–215; these read AG and NT.

This sequence belongs to the ThiG family. As to quaternary structure, homotetramer. Forms heterodimers with either ThiH or ThiS.

It localises to the cytoplasm. The catalysed reaction is [ThiS sulfur-carrier protein]-C-terminal-Gly-aminoethanethioate + 2-iminoacetate + 1-deoxy-D-xylulose 5-phosphate = [ThiS sulfur-carrier protein]-C-terminal Gly-Gly + 2-[(2R,5Z)-2-carboxy-4-methylthiazol-5(2H)-ylidene]ethyl phosphate + 2 H2O + H(+). Its pathway is cofactor biosynthesis; thiamine diphosphate biosynthesis. Catalyzes the rearrangement of 1-deoxy-D-xylulose 5-phosphate (DXP) to produce the thiazole phosphate moiety of thiamine. Sulfur is provided by the thiocarboxylate moiety of the carrier protein ThiS. In vitro, sulfur can be provided by H(2)S. The polypeptide is Thiazole synthase (Burkholderia thailandensis (strain ATCC 700388 / DSM 13276 / CCUG 48851 / CIP 106301 / E264)).